The sequence spans 362 residues: NAD(P)H-quinone oxidoreductase subunit 1, chloroplastic (362 aa).

The next 7 helical transmembrane spans lie at 26–48 (LIWI…VIVW), 97–119 (FSIG…PLGY), 126–148 (LSIG…LMAG), 163–185 (AAAQ…SLLS), 254–276 (LFYL…LYLG), 296–318 (IIGI…LFLF), and 338–360 (LGWK…FQLV).

Belongs to the complex I subunit 1 family. As to quaternary structure, NDH is composed of at least 16 different subunits, 5 of which are encoded in the nucleus.

Its subcellular location is the plastid. It localises to the chloroplast thylakoid membrane. It carries out the reaction a plastoquinone + NADH + (n+1) H(+)(in) = a plastoquinol + NAD(+) + n H(+)(out). The enzyme catalyses a plastoquinone + NADPH + (n+1) H(+)(in) = a plastoquinol + NADP(+) + n H(+)(out). In terms of biological role, NDH shuttles electrons from NAD(P)H:plastoquinone, via FMN and iron-sulfur (Fe-S) centers, to quinones in the photosynthetic chain and possibly in a chloroplast respiratory chain. The immediate electron acceptor for the enzyme in this species is believed to be plastoquinone. Couples the redox reaction to proton translocation, and thus conserves the redox energy in a proton gradient. This is NAD(P)H-quinone oxidoreductase subunit 1, chloroplastic (ndhA) from Zea mays (Maize).